The sequence spans 295 residues: MAVDAKLIKELREITQAGMMDCKKALEASDNNIDNAIVWLRENGLAKAAKKTDRVAAEGIVLAKENDQKIVILEVNSETDFVAKNEKFLSLVDEIANALLNSNASSLEEGLQVKTDSGLTIEQSLISATATIGEKIALRRFELVNKTSGSSVIYNHANKRVSTLLVFDNKLDPTDAYNVAMHVAAMAPKYINMDQIPEDFKNAEMHIIKEQAKDDAKLQAKPANVLENILKGKLSKRLAEVSLLDQLFVIDESFKVGDFLKSKHVSLVKMIRYEVGEGIEKVVTNFADEVAAQLK.

The involved in Mg(2+) ion dislocation from EF-Tu stretch occupies residues 79–82; the sequence is TDFV.

It belongs to the EF-Ts family.

The protein resides in the cytoplasm. Functionally, associates with the EF-Tu.GDP complex and induces the exchange of GDP to GTP. It remains bound to the aminoacyl-tRNA.EF-Tu.GTP complex up to the GTP hydrolysis stage on the ribosome. This chain is Elongation factor Ts, found in Mycoplasma mycoides subsp. mycoides SC (strain CCUG 32753 / NCTC 10114 / PG1).